We begin with the raw amino-acid sequence, 571 residues long: Proline--tRNA ligase (571 aa).

The protein belongs to the class-II aminoacyl-tRNA synthetase family. ProS type 1 subfamily. Homodimer.

It localises to the cytoplasm. It catalyses the reaction tRNA(Pro) + L-proline + ATP = L-prolyl-tRNA(Pro) + AMP + diphosphate. In terms of biological role, catalyzes the attachment of proline to tRNA(Pro) in a two-step reaction: proline is first activated by ATP to form Pro-AMP and then transferred to the acceptor end of tRNA(Pro). As ProRS can inadvertently accommodate and process non-cognate amino acids such as alanine and cysteine, to avoid such errors it has two additional distinct editing activities against alanine. One activity is designated as 'pretransfer' editing and involves the tRNA(Pro)-independent hydrolysis of activated Ala-AMP. The other activity is designated 'posttransfer' editing and involves deacylation of mischarged Ala-tRNA(Pro). The misacylated Cys-tRNA(Pro) is not edited by ProRS. This chain is Proline--tRNA ligase, found in Pseudomonas paraeruginosa (strain DSM 24068 / PA7) (Pseudomonas aeruginosa (strain PA7)).